A 447-amino-acid polypeptide reads, in one-letter code: ATP-dependent protease ATPase subunit HslU (447 aa).

ATP-binding positions include isoleucine 18, 60-65, aspartate 259, glutamate 325, and arginine 397; that span reads GVGKTE.

It belongs to the ClpX chaperone family. HslU subfamily. A double ring-shaped homohexamer of HslV is capped on each side by a ring-shaped HslU homohexamer. The assembly of the HslU/HslV complex is dependent on binding of ATP.

The protein resides in the cytoplasm. In terms of biological role, ATPase subunit of a proteasome-like degradation complex; this subunit has chaperone activity. The binding of ATP and its subsequent hydrolysis by HslU are essential for unfolding of protein substrates subsequently hydrolyzed by HslV. HslU recognizes the N-terminal part of its protein substrates and unfolds these before they are guided to HslV for hydrolysis. The chain is ATP-dependent protease ATPase subunit HslU from Burkholderia lata (strain ATCC 17760 / DSM 23089 / LMG 22485 / NCIMB 9086 / R18194 / 383).